We begin with the raw amino-acid sequence, 163 residues long: Nucleotide-binding protein DET1318 (163 aa).

It belongs to the YajQ family.

Functionally, nucleotide-binding protein. This is Nucleotide-binding protein DET1318 from Dehalococcoides mccartyi (strain ATCC BAA-2266 / KCTC 15142 / 195) (Dehalococcoides ethenogenes (strain 195)).